Consider the following 70-residue polypeptide: DNA-directed RNA polymerase subunit omega (70 aa).

The protein belongs to the RNA polymerase subunit omega family. As to quaternary structure, in cyanobacteria the RNAP catalytic core is composed of 2 alpha, 1 beta, 1 beta', 1 gamma and 1 omega subunit. When a sigma factor is associated with the core the holoenzyme is formed, which can initiate transcription.

It carries out the reaction RNA(n) + a ribonucleoside 5'-triphosphate = RNA(n+1) + diphosphate. In terms of biological role, promotes RNA polymerase assembly. Latches the N- and C-terminal regions of the beta' subunit thereby facilitating its interaction with the beta and alpha subunits. This Prochlorococcus marinus (strain NATL1A) protein is DNA-directed RNA polymerase subunit omega.